The following is a 147-amino-acid chain: Hemoglobin subunit rho (147 aa).

The region spanning 3–147 (HWSAEEKQLI…VAHALAYKYH (145 aa)) is the Globin domain. Heme b is bound by residues His-64 and His-93.

Belongs to the globin family.

The rho chain is the major early embryonic beta-type hemoglobin chain. The chain is Hemoglobin subunit rho from Gallus gallus (Chicken).